A 418-amino-acid chain; its full sequence is L-rhamnose isomerase (418 aa).

Residues H262, D294, and D296 each contribute to the Mn(2+) site.

Belongs to the rhamnose isomerase family. In terms of assembly, homotetramer. The cofactor is Mn(2+).

The protein resides in the cytoplasm. The catalysed reaction is L-rhamnopyranose = L-rhamnulose. The protein operates within carbohydrate degradation; L-rhamnose degradation; glycerone phosphate from L-rhamnose: step 1/3. In terms of biological role, catalyzes the interconversion of L-rhamnose and L-rhamnulose. The chain is L-rhamnose isomerase from Yersinia pseudotuberculosis serotype O:1b (strain IP 31758).